Consider the following 199-residue polypeptide: Probable GTP-binding protein EngB (199 aa).

The EngB-type G domain occupies Asp-28–Val-199. Residues Gly-36–Ser-43, Gly-63–Leu-67, Asp-81–Gly-84, Thr-148–Asp-151, and Phe-180–Ser-182 each bind GTP. Ser-43 and Thr-65 together coordinate Mg(2+).

Belongs to the TRAFAC class TrmE-Era-EngA-EngB-Septin-like GTPase superfamily. EngB GTPase family. The cofactor is Mg(2+).

Functionally, necessary for normal cell division and for the maintenance of normal septation. The polypeptide is Probable GTP-binding protein EngB (Streptococcus pyogenes serotype M1).